The primary structure comprises 680 residues: Epithelial splicing regulatory protein 1 (680 aa).

RRM domains are found at residues 224 to 301, 325 to 405, and 444 to 524; these read TVVR…KATG, VIVR…RSTA, and DCIR…QCSA. A Phosphoserine modification is found at Ser542. Omega-N-methylarginine is present on Arg581.

It belongs to the ESRP family. In terms of tissue distribution, epithelial cell-specific. Epithelial-specific expression in diverse tissues and organs with particularly notable levels of expression in skin and gastrointestinal epithelia.

The protein localises to the nucleus. In terms of biological role, mRNA splicing factor that regulates the formation of epithelial cell-specific isoforms. Specifically regulates the expression of FGFR2-IIIb, an epithelial cell-specific isoform of FGFR2. Also regulates the splicing of CD44, CTNND1, ENAH, 3 transcripts that undergo changes in splicing during the epithelial-to-mesenchymal transition (EMT). Acts by directly binding specific sequences in mRNAs. Binds the GU-rich sequence motifs in the ISE/ISS-3, a cis-element regulatory region present in the mRNA of FGFR2. Regulates splicing and expression of genes involved in inner ear development, auditory hair cell differentiation, and cell fate specification in the cochlear epithelium. The chain is Epithelial splicing regulatory protein 1 (Esrp1) from Mus musculus (Mouse).